The chain runs to 889 residues: DNA mismatch repair protein MutS (889 aa).

620 to 627 lines the ATP pocket; sequence GPNMAGKS. Positions 812–831 are disordered; the sequence is AAAPSGAARRGRPAREKEPG.

The protein belongs to the DNA mismatch repair MutS family.

Its function is as follows. This protein is involved in the repair of mismatches in DNA. It is possible that it carries out the mismatch recognition step. This protein has a weak ATPase activity. This Syntrophobacter fumaroxidans (strain DSM 10017 / MPOB) protein is DNA mismatch repair protein MutS.